The primary structure comprises 180 residues: Large ribosomal subunit protein uL10 (180 aa).

This sequence belongs to the universal ribosomal protein uL10 family. In terms of assembly, part of the ribosomal stalk of the 50S ribosomal subunit. The N-terminus interacts with L11 and the large rRNA to form the base of the stalk. The C-terminus forms an elongated spine to which L12 dimers bind in a sequential fashion forming a multimeric L10(L12)X complex.

Its function is as follows. Forms part of the ribosomal stalk, playing a central role in the interaction of the ribosome with GTP-bound translation factors. In Thermosipho melanesiensis (strain DSM 12029 / CIP 104789 / BI429), this protein is Large ribosomal subunit protein uL10.